We begin with the raw amino-acid sequence, 180 residues long: Large ribosomal subunit protein uL5 (180 aa).

The protein belongs to the universal ribosomal protein uL5 family. Part of the 50S ribosomal subunit; part of the 5S rRNA/L5/L18/L25 subcomplex. Contacts the 5S rRNA and the P site tRNA. Forms a bridge to the 30S subunit in the 70S ribosome.

Its function is as follows. This is one of the proteins that bind and probably mediate the attachment of the 5S RNA into the large ribosomal subunit, where it forms part of the central protuberance. In the 70S ribosome it contacts protein S13 of the 30S subunit (bridge B1b), connecting the 2 subunits; this bridge is implicated in subunit movement. Contacts the P site tRNA; the 5S rRNA and some of its associated proteins might help stabilize positioning of ribosome-bound tRNAs. This Polynucleobacter necessarius subsp. necessarius (strain STIR1) protein is Large ribosomal subunit protein uL5.